The primary structure comprises 379 residues: Cobalt-precorrin-5B C(1)-methyltransferase (379 aa).

Belongs to the CbiD family.

The catalysed reaction is Co-precorrin-5B + S-adenosyl-L-methionine = Co-precorrin-6A + S-adenosyl-L-homocysteine. Its pathway is cofactor biosynthesis; adenosylcobalamin biosynthesis; cob(II)yrinate a,c-diamide from sirohydrochlorin (anaerobic route): step 6/10. Catalyzes the methylation of C-1 in cobalt-precorrin-5B to form cobalt-precorrin-6A. The polypeptide is Cobalt-precorrin-5B C(1)-methyltransferase (Salmonella arizonae (strain ATCC BAA-731 / CDC346-86 / RSK2980)).